The sequence spans 361 residues: S-adenosylmethionine:tRNA ribosyltransferase-isomerase (361 aa).

Belongs to the QueA family. Monomer.

It is found in the cytoplasm. It catalyses the reaction 7-aminomethyl-7-carbaguanosine(34) in tRNA + S-adenosyl-L-methionine = epoxyqueuosine(34) in tRNA + adenine + L-methionine + 2 H(+). It participates in tRNA modification; tRNA-queuosine biosynthesis. In terms of biological role, transfers and isomerizes the ribose moiety from AdoMet to the 7-aminomethyl group of 7-deazaguanine (preQ1-tRNA) to give epoxyqueuosine (oQ-tRNA). This is S-adenosylmethionine:tRNA ribosyltransferase-isomerase from Mesorhizobium japonicum (strain LMG 29417 / CECT 9101 / MAFF 303099) (Mesorhizobium loti (strain MAFF 303099)).